The primary structure comprises 472 residues: Keratin, type I cytoskeletal 14 (472 aa).

The interval 1–114 is head; it reads MTTCSRQFTS…AGGDGLLVGS (114 aa). Residues 115–150 are coil 1A; it reads EKVTMQNLNDRLASYLDKVRALEEANADLEVKIRDW. The IF rod domain maps to 115-426; the sequence is EKVTMQNLND…RLLEGEDAHL (312 aa). A linker 1 region spans residues 151–168; the sequence is YQRQRPAEIKDYSPYFKT. A coil 1B region spans residues 169–260; that stretch reads IEDLRNKILT…KNHEEEMNAL (92 aa). Positions 261 to 283 are linker 12; sequence RGQVGGDVNVEMDAAPGVDLSRI. Positions 284–422 are coil 2; that stretch reads LNEMRDQYEK…ATYRRLLEGE (139 aa). Residues 423-472 are tail; the sequence is DAHLSSSQFSSGSQSSRDVTSSSRQIRTKVMDVHDGKVVSTHEQVLRTKN. The interval 425-472 is interaction with Type I keratins and keratin filaments; it reads HLSSSQFSSGSQSSRDVTSSSRQIRTKVMDVHDGKVVSTHEQVLRTKN. Residues 426–472 are disordered; the sequence is LSSSQFSSGSQSSRDVTSSSRQIRTKVMDVHDGKVVSTHEQVLRTKN. Residues 427 to 445 are compositionally biased toward low complexity; it reads SSSQFSSGSQSSRDVTSSS. S435 carries the phosphoserine modification.

This sequence belongs to the intermediate filament family. As to quaternary structure, heterotetramer of two type I and two type II keratins. Forms a disulfide-linked heterodimer (via 2B domains) with KRT5 (via 2B domains). Forms a heterodimer with KRT1; the interaction is more abundant in the absence of KRT5. Interacts with PLEC isoform 1C, when in a heterodimer with KRT5. Interacts with TRADD and with keratin filaments. Associates with other type I keratins. Interacts with EPPK1. Interacts with KLHL24. Interacts with PKP1 (via N-terminus) and PKP2. A disulfide bond is formed between rather than within filaments and promotes the formation of a keratin filament cage around the nucleus. Post-translationally, ubiquitinated by the BCR(KLHL24) E3 ubiquitin ligase complex. Expressed in the corneal epithelium (at protein level). Detected in the basal layer, lowered within the more apically located layers specifically in the stratum spinosum, stratum granulosum but is not detected in stratum corneum. Strongly expressed in the outer root sheath of anagen follicles but not in the germinative matrix, inner root sheath or hair. Found in keratinocytes surrounding the club hair during telogen.

It localises to the cytoplasm. It is found in the nucleus. The nonhelical tail domain is involved in promoting KRT5-KRT14 filaments to self-organize into large bundles and enhances the mechanical properties involved in resilience of keratin intermediate filaments in vitro. The protein is Keratin, type I cytoskeletal 14 (KRT14) of Homo sapiens (Human).